Here is a 321-residue protein sequence, read N- to C-terminus: Ferredoxin--NADP reductase (321 aa).

Positions 33, 41, 46, 86, 119, 277, and 318 each coordinate FAD.

This sequence belongs to the ferredoxin--NADP reductase type 2 family. In terms of assembly, homodimer. It depends on FAD as a cofactor.

The enzyme catalyses 2 reduced [2Fe-2S]-[ferredoxin] + NADP(+) + H(+) = 2 oxidized [2Fe-2S]-[ferredoxin] + NADPH. The polypeptide is Ferredoxin--NADP reductase (Lactococcus lactis subsp. cremoris (strain SK11)).